A 70-amino-acid chain; its full sequence is Bowman-Birk type proteinase inhibitor A-II (70 aa).

7 disulfides stabilise this stretch: cysteine 11–cysteine 68, cysteine 12–cysteine 29, cysteine 15–cysteine 63, cysteine 17–cysteine 27, cysteine 36–cysteine 43, cysteine 40–cysteine 55, and cysteine 45–cysteine 53.

It belongs to the Bowman-Birk serine protease inhibitor family.

These proteins inhibit trypsin and chymotrypsin, having 2 sites of interaction with trypsin. The site of interaction with chymotrypsin has not been determined but is not independent of the trypsin-reactive sites. This is Bowman-Birk type proteinase inhibitor A-II from Arachis hypogaea (Peanut).